A 221-amino-acid polypeptide reads, in one-letter code: Oligoribonuclease (221 aa).

The Exonuclease domain occupies 21–186 (LVWVDLEMTG…ADIVESIREL (166 aa)). The active site involves tyrosine 143.

It belongs to the oligoribonuclease family.

The protein resides in the cytoplasm. In terms of biological role, 3'-to-5' exoribonuclease specific for small oligoribonucleotides. The polypeptide is Oligoribonuclease (Corynebacterium efficiens (strain DSM 44549 / YS-314 / AJ 12310 / JCM 11189 / NBRC 100395)).